Reading from the N-terminus, the 201-residue chain is ATP-dependent Clp protease proteolytic subunit (201 aa).

Residue serine 101 is the Nucleophile of the active site. Residue histidine 126 is part of the active site.

The protein belongs to the peptidase S14 family. Fourteen ClpP subunits assemble into 2 heptameric rings which stack back to back to give a disk-like structure with a central cavity, resembling the structure of eukaryotic proteasomes.

The protein resides in the cytoplasm. The enzyme catalyses Hydrolysis of proteins to small peptides in the presence of ATP and magnesium. alpha-casein is the usual test substrate. In the absence of ATP, only oligopeptides shorter than five residues are hydrolyzed (such as succinyl-Leu-Tyr-|-NHMec, and Leu-Tyr-Leu-|-Tyr-Trp, in which cleavage of the -Tyr-|-Leu- and -Tyr-|-Trp bonds also occurs).. Functionally, cleaves peptides in various proteins in a process that requires ATP hydrolysis. Has a chymotrypsin-like activity. Plays a major role in the degradation of misfolded proteins. This is ATP-dependent Clp protease proteolytic subunit from Francisella tularensis subsp. tularensis (strain FSC 198).